The primary structure comprises 784 residues: Homoaconitase, mitochondrial (784 aa).

Residues 1 to 32 (MIHPVRRALAVAASRAPRQFLAAASRTTSVRS) constitute a mitochondrion transit peptide. [4Fe-4S] cluster contacts are provided by Cys-399, Cys-468, and Cys-471. The segment at 572 to 596 (EAGLTPESTSSSSSSSSSSEEESLT) is disordered. Low complexity predominate over residues 578–589 (ESTSSSSSSSSS).

It belongs to the aconitase/IPM isomerase family. The cofactor is [4Fe-4S] cluster.

It is found in the mitochondrion. The catalysed reaction is (2R,3S)-homoisocitrate = cis-homoaconitate + H2O. Its pathway is amino-acid biosynthesis; L-lysine biosynthesis via AAA pathway; L-alpha-aminoadipate from 2-oxoglutarate: step 3/5. Functionally, catalyzes the reversible hydration of cis-homoaconitate to (2R,3S)-homoisocitrate, a step in the alpha-aminoadipate pathway for lysine biosynthesis. This Neurospora crassa (strain ATCC 24698 / 74-OR23-1A / CBS 708.71 / DSM 1257 / FGSC 987) protein is Homoaconitase, mitochondrial (lys-4).